A 383-amino-acid chain; its full sequence is S-adenosylmethionine synthase (383 aa).

H15 is a binding site for ATP. A Mg(2+)-binding site is contributed by D17. Position 43 (E43) interacts with K(+). Residues E56 and Q99 each coordinate L-methionine. Residues 99-109 are flexible loop; the sequence is QSPDINQGVDR. ATP contacts are provided by residues 164 to 166, 230 to 231, D239, 245 to 246, A262, and K266; these read DAK, RF, and RK. D239 is a binding site for L-methionine. K270 is a binding site for L-methionine.

Belongs to the AdoMet synthase family. As to quaternary structure, homotetramer; dimer of dimers. Mg(2+) serves as cofactor. It depends on K(+) as a cofactor.

It localises to the cytoplasm. The enzyme catalyses L-methionine + ATP + H2O = S-adenosyl-L-methionine + phosphate + diphosphate. The protein operates within amino-acid biosynthesis; S-adenosyl-L-methionine biosynthesis; S-adenosyl-L-methionine from L-methionine: step 1/1. Catalyzes the formation of S-adenosylmethionine (AdoMet) from methionine and ATP. The overall synthetic reaction is composed of two sequential steps, AdoMet formation and the subsequent tripolyphosphate hydrolysis which occurs prior to release of AdoMet from the enzyme. The chain is S-adenosylmethionine synthase from Shewanella denitrificans (strain OS217 / ATCC BAA-1090 / DSM 15013).